The primary structure comprises 447 residues: 2-oxoadipate dioxygenase/decarboxylase (447 aa).

The 2-oxoadipate site is built by histidine 68, arginine 72, and histidine 224. Histidine 68 provides a ligand contact to Fe(2+). Fe(2+)-binding residues include histidine 224 and glutamate 290. A 2-oxoadipate-binding site is contributed by valine 391.

The protein belongs to the 2-oxoadipate dioxygenase/decarboxylase family. It depends on Fe(2+) as a cofactor.

The catalysed reaction is 2-oxoadipate + O2 = (R)-2-hydroxyglutarate + CO2. In terms of biological role, catalyzes the decarboxylation and hydroxylation of 2-oxoadipate (2OA) to form D-2-hydroxyglutarate (D-2-HGA). The chain is 2-oxoadipate dioxygenase/decarboxylase from Shigella flexneri.